A 316-amino-acid chain; its full sequence is MPKKKTGARKKAENRREREKQLRASRSTVDLAKHPCNASMECDKCQRRQKNRAFCYFCNSVQKLPICAQCGKTKCMMKSSDCVIKHAGVYSTGLAMVGAICDFCEAWVCHGRKCLSTHACACPLTDAECVECERGVWDHGGRIFSCSFCHNFLCEDDQFEHQASCQVLEAETFKCVSCNRLGQHSCLRCKACFCDEHTRSKVFKQEKGKQPPCPKCGHETQETKDLSMSTRSLKFGRQTGGEEDGASGYDAYWKNLSSDKYGDTGYHDDDEEEDEAEDEEEEDGKDSDAESSDLFNNLNLGRTYASGYAHYEEQES.

The interval 1 to 24 is disordered; sequence MPKKKTGARKKAENRREREKQLRA. Positions 3 to 11 match the Nuclear localization signal motif; sequence KKKTGARKK. Residues 10 to 22 show a composition bias toward basic and acidic residues; sequence KKAENRREREKQL. C4-type zinc fingers lie at residues 42 to 58, 67 to 104, 129 to 149, and 175 to 189; these read CDKC…CYFC, CAQC…CDFC, CVEC…CSFC, and CVSC…CLRC. The disordered stretch occupies residues 227–299; the sequence is SMSTRSLKFG…ESSDLFNNLN (73 aa). Positions 268 to 291 are enriched in acidic residues; it reads DDDEEEDEAEDEEEEDGKDSDAES. Ser287 bears the Phosphoserine mark.

The protein belongs to the NOA36 family.

Its subcellular location is the nucleus. The protein resides in the nucleolus. It is found in the chromosome. It localises to the centromere. This is Zinc finger protein 330 (Znf330) from Mus musculus (Mouse).